A 133-amino-acid chain; its full sequence is uncharacterized protein (133 aa).

This is an uncharacterized protein from Aquifex aeolicus (strain VF5).